The following is a 343-amino-acid chain: Anthranilate phosphoribosyltransferase (343 aa).

5-phospho-alpha-D-ribose 1-diphosphate-binding positions include Gly84, 87 to 88, Thr92, 94 to 97, 112 to 120, and Ser124; these read GD, NIST, and KHGNRGVSS. Gly84 is a binding site for anthranilate. Position 96 (Ser96) interacts with Mg(2+). Asn115 contacts anthranilate. Arg170 serves as a coordination point for anthranilate. Mg(2+)-binding residues include Asp229 and Glu230.

It belongs to the anthranilate phosphoribosyltransferase family. As to quaternary structure, homodimer. The cofactor is Mg(2+).

It carries out the reaction N-(5-phospho-beta-D-ribosyl)anthranilate + diphosphate = 5-phospho-alpha-D-ribose 1-diphosphate + anthranilate. It functions in the pathway amino-acid biosynthesis; L-tryptophan biosynthesis; L-tryptophan from chorismate: step 2/5. Functionally, catalyzes the transfer of the phosphoribosyl group of 5-phosphorylribose-1-pyrophosphate (PRPP) to anthranilate to yield N-(5'-phosphoribosyl)-anthranilate (PRA). In Burkholderia orbicola (strain AU 1054), this protein is Anthranilate phosphoribosyltransferase.